Reading from the N-terminus, the 499-residue chain is Lysine--tRNA ligase (499 aa).

Mg(2+)-binding residues include E408 and E415.

Belongs to the class-II aminoacyl-tRNA synthetase family. Homodimer. Requires Mg(2+) as cofactor.

It is found in the cytoplasm. It catalyses the reaction tRNA(Lys) + L-lysine + ATP = L-lysyl-tRNA(Lys) + AMP + diphosphate. In Agrobacterium fabrum (strain C58 / ATCC 33970) (Agrobacterium tumefaciens (strain C58)), this protein is Lysine--tRNA ligase.